The sequence spans 90 residues: Putative membrane protein insertion efficiency factor (90 aa).

Belongs to the UPF0161 family.

Its subcellular location is the cell membrane. Functionally, could be involved in insertion of integral membrane proteins into the membrane. In Oceanobacillus iheyensis (strain DSM 14371 / CIP 107618 / JCM 11309 / KCTC 3954 / HTE831), this protein is Putative membrane protein insertion efficiency factor.